The sequence spans 494 residues: Glutamate--tRNA ligase (494 aa).

A 'HIGH' region motif is present at residues 9 to 19 (PSPTGDPHLGT). The short motif at 250–254 (KLSKR) is the 'KMSKS' region element. ATP is bound at residue Lys253.

This sequence belongs to the class-I aminoacyl-tRNA synthetase family. Glutamate--tRNA ligase type 1 subfamily. Monomer.

The protein localises to the cytoplasm. The enzyme catalyses tRNA(Glu) + L-glutamate + ATP = L-glutamyl-tRNA(Glu) + AMP + diphosphate. Its function is as follows. Catalyzes the attachment of glutamate to tRNA(Glu) in a two-step reaction: glutamate is first activated by ATP to form Glu-AMP and then transferred to the acceptor end of tRNA(Glu). The protein is Glutamate--tRNA ligase of Pseudoalteromonas translucida (strain TAC 125).